A 428-amino-acid chain; its full sequence is D-amino acid dehydrogenase (428 aa).

3–17 (VVVLGSGVVGVASAY) provides a ligand contact to FAD.

This sequence belongs to the DadA oxidoreductase family. FAD serves as cofactor.

The catalysed reaction is a D-alpha-amino acid + A + H2O = a 2-oxocarboxylate + AH2 + NH4(+). The protein operates within amino-acid degradation; D-alanine degradation; NH(3) and pyruvate from D-alanine: step 1/1. Functionally, oxidative deamination of D-amino acids. In Burkholderia ambifaria (strain MC40-6), this protein is D-amino acid dehydrogenase.